The chain runs to 225 residues: UPF0758 protein Shewmr7_0359 (225 aa).

An MPN domain is found at 102–224 (VLTNPDLTRD…IVSFAERGWI (123 aa)). Positions 173, 175, and 186 each coordinate Zn(2+). The JAMM motif motif lies at 173 to 186 (HNHPSGIAEPSQAD).

This sequence belongs to the UPF0758 family.

The sequence is that of UPF0758 protein Shewmr7_0359 from Shewanella sp. (strain MR-7).